The following is a 564-amino-acid chain: Chaperonin GroEL 2 (564 aa).

Residues 29–32 (TIGP), 86–90 (DGTTT), Gly413, and Asp493 each bind ATP. Positions 521-541 (DKPEPPAPAGDGGGDPMGGMG) are disordered. The span at 530–541 (GDGGGDPMGGMG) shows a compositional bias: gly residues.

The protein belongs to the chaperonin (HSP60) family. Forms a cylinder of 14 subunits composed of two heptameric rings stacked back-to-back. Interacts with the co-chaperonin GroES.

The protein resides in the cytoplasm. The enzyme catalyses ATP + H2O + a folded polypeptide = ADP + phosphate + an unfolded polypeptide.. In terms of biological role, together with its co-chaperonin GroES, plays an essential role in assisting protein folding. The GroEL-GroES system forms a nano-cage that allows encapsulation of the non-native substrate proteins and provides a physical environment optimized to promote and accelerate protein folding. This Prochlorococcus marinus (strain MIT 9303) protein is Chaperonin GroEL 2.